The chain runs to 312 residues: Serine protease 48 (312 aa).

A signal peptide spans 1 to 22 (MGPAGLKVLLLLFLGAFQGSFT). Residues 40–276 (IVGGQDAALG…YQKWISAIIS (237 aa)) enclose the Peptidase S1 domain. Cysteine 65 and cysteine 81 are disulfide-bonded. Residues histidine 80 and aspartate 126 each act as charge relay system in the active site. Residue asparagine 149 is glycosylated (N-linked (GlcNAc...) asparagine). 3 cysteine pairs are disulfide-bonded: cysteine 160–cysteine 235, cysteine 190–cysteine 214, and cysteine 225–cysteine 253. The active-site Charge relay system is the serine 229. Asparagine 263 carries an N-linked (GlcNAc...) asparagine glycan.

The protein belongs to the peptidase S1 family.

Its subcellular location is the secreted. In Mus musculus (Mouse), this protein is Serine protease 48 (Prss48).